We begin with the raw amino-acid sequence, 306 residues long: Mitochondrial substrate carrier family protein ucpA (306 aa).

Over 1–15 (MSVNLNNNKNNKNKV) the chain is Mitochondrial intermembrane. 3 Solcar repeats span residues 13 to 103 (NKVA…ISNA), 112 to 204 (YFFL…CKNL), and 211 to 301 (DGIY…FKKL). A helical transmembrane segment spans residues 16–36 (AIGFISGSLASICATTVTNPI). The Mitochondrial matrix portion of the chain corresponds to 37–83 (ELVKTRLQLQGELQLSQRIYNGVWDAFKQIYKTEGIRGLQSGLIPAY). A helical transmembrane segment spans residues 84–103 (FSQATMQGIRLGSFDLISNA). At 104 to 117 (LGAKPNQDYFFLKN) the chain is on the mitochondrial intermembrane side. Residues 118-138 (LLAGATAGAIGAAAGSPFDLV) form a helical membrane-spanning segment. At 139 to 174 (KVRMQAANMYKNDPQFVGYSSSFAAFKQIIQKEGFK) the chain is on the mitochondrial matrix side. A helical membrane pass occupies residues 175-195 (GLTRGMLTSAQRTAVGSAIQL). The Mitochondrial intermembrane segment spans residues 196 to 211 (STYGSCKNLVLNFVDD). The chain crosses the membrane as a helical span at residues 212–232 (GIYAYIISSMVAGFIVTFGMN). Over 233–276 (PFDVARTRLYFQGKGNSHGEIYKGLMDCVYKTVKKEGFGAVYKG) the chain is Mitochondrial matrix. A helical transmembrane segment spans residues 277–295 (FWAHYLRLGPHTILTLVFW). Topologically, residues 296 to 306 (EQFKKLFSGEL) are mitochondrial intermembrane.

This sequence belongs to the mitochondrial carrier (TC 2.A.29) family.

It localises to the mitochondrion inner membrane. In terms of biological role, mitochondrial solute carriers shuttle metabolites, nucleotides, and cofactors through the mitochondrial inner membrane. Transports oxaloacetate and sulfate. In Dictyostelium discoideum (Social amoeba), this protein is Mitochondrial substrate carrier family protein ucpA (ucpA).